Reading from the N-terminus, the 473-residue chain is Glutamyl-tRNA reductase (473 aa).

Residues 49 to 52 (TCNR), S109, 114 to 116 (ESQ), and Q120 contribute to the substrate site. Catalysis depends on C50, which acts as the Nucleophile. Residues 196-215 (LDGGGVAAEGPRHAVTPEPP) form a disordered region. 226-231 (GAGAVG) is a binding site for NADP(+).

Belongs to the glutamyl-tRNA reductase family. As to quaternary structure, homodimer.

It catalyses the reaction (S)-4-amino-5-oxopentanoate + tRNA(Glu) + NADP(+) = L-glutamyl-tRNA(Glu) + NADPH + H(+). The protein operates within porphyrin-containing compound metabolism; protoporphyrin-IX biosynthesis; 5-aminolevulinate from L-glutamyl-tRNA(Glu): step 1/2. Functionally, catalyzes the NADPH-dependent reduction of glutamyl-tRNA(Glu) to glutamate 1-semialdehyde (GSA). The protein is Glutamyl-tRNA reductase of Frankia casuarinae (strain DSM 45818 / CECT 9043 / HFP020203 / CcI3).